The following is a 289-amino-acid chain: Phosphate import ATP-binding protein PstB 2 (289 aa).

One can recognise an ABC transporter domain in the interval 37–276; the sequence is LHAKVEAFYY…HTPVIFQNPT (240 aa). 69–76 contributes to the ATP binding site; that stretch reads GPSGCGKS.

This sequence belongs to the ABC transporter superfamily. Phosphate importer (TC 3.A.1.7) family. The complex is composed of two ATP-binding proteins (PstB), two transmembrane proteins (PstC and PstA) and a solute-binding protein (PstS).

The protein localises to the cell inner membrane. The catalysed reaction is phosphate(out) + ATP + H2O = ADP + 2 phosphate(in) + H(+). In terms of biological role, part of the ABC transporter complex PstSACB involved in phosphate import. Responsible for energy coupling to the transport system. This chain is Phosphate import ATP-binding protein PstB 2, found in Trichormus variabilis (strain ATCC 29413 / PCC 7937) (Anabaena variabilis).